The sequence spans 352 residues: tRNA pseudouridine synthase D (352 aa).

Aspartate 81 serves as the catalytic Nucleophile. A TRUD domain is found at 158–306 (GVPNYFGQQR…RHERRTLLLK (149 aa)).

The protein belongs to the pseudouridine synthase TruD family.

It carries out the reaction uridine(13) in tRNA = pseudouridine(13) in tRNA. In terms of biological role, responsible for synthesis of pseudouridine from uracil-13 in transfer RNAs. This is tRNA pseudouridine synthase D from Photobacterium profundum (strain SS9).